We begin with the raw amino-acid sequence, 276 residues long: Large ribosomal subunit protein uL2 (276 aa).

Disordered stretches follow at residues 26–45 (RSTPERSLTEGLTKKSGRNC) and 224–276 (AMNP…RGQK). Residues 259–276 (RDKKKASSKLIIKRRGQK) are compositionally biased toward basic residues.

Belongs to the universal ribosomal protein uL2 family. As to quaternary structure, part of the 50S ribosomal subunit. Forms a bridge to the 30S subunit in the 70S ribosome.

In terms of biological role, one of the primary rRNA binding proteins. Required for association of the 30S and 50S subunits to form the 70S ribosome, for tRNA binding and peptide bond formation. It has been suggested to have peptidyltransferase activity; this is somewhat controversial. Makes several contacts with the 16S rRNA in the 70S ribosome. The sequence is that of Large ribosomal subunit protein uL2 from Oleidesulfovibrio alaskensis (strain ATCC BAA-1058 / DSM 17464 / G20) (Desulfovibrio alaskensis).